The sequence spans 261 residues: Probable cyclic nucleotide phosphodiesterase PSM_A2567 (261 aa).

Residues Asp-22, His-24, Asp-62, Asn-94, His-160, His-198, and His-200 each contribute to the Fe cation site. AMP-binding positions include His-24, Asp-62, and 94-95; that span reads NH. His-200 is a binding site for AMP.

This sequence belongs to the cyclic nucleotide phosphodiesterase class-III family. It depends on Fe(2+) as a cofactor.

This is Probable cyclic nucleotide phosphodiesterase PSM_A2567 from Pseudoalteromonas sp. (strain SM9913).